Here is a 488-residue protein sequence, read N- to C-terminus: Ankyrin repeat domain-containing protein 13C (488 aa).

The tract at residues 1 to 60 (MTGEKIRSVRKERKSGLDLLEPDEEPAATGPAKHRGSKIFSGGNHRISRSSSSPGDPDGA) is disordered. The segment covering 41–59 (SGGNHRISRSSSSPGDPDG) has biased composition (low complexity). ANK repeat units follow at residues 58–87 (DGAYPVHECVFRGDVRRLSSLIRTQNIAQK), 90–119 (HGNTPLHLAVMMGHKECAHLLLAHNAPVKV), and 123–152 (QGWSPLAEAISYGDRQMITALLRKLKQQSR).

The protein localises to the endoplasmic reticulum membrane. Its function is as follows. Acts as a molecular chaperone for G protein-coupled receptors, regulating their biogenesis and exit from the ER. In Danio rerio (Zebrafish), this protein is Ankyrin repeat domain-containing protein 13C (ankrd13c).